Reading from the N-terminus, the 94-residue chain is uncharacterized protein (94 aa).

2 consecutive transmembrane segments (helical) span residues 9–29 (TLAKIVCTVTLITLYFYFFST) and 34–54 (LIELAVQMFFALIGLFWVFIV).

The protein resides in the cell membrane. This is an uncharacterized protein from Bacillus subtilis (strain 168).